The following is a 261-amino-acid chain: Proliferating cell nuclear antigen (261 aa).

Residues 61–80 (RCDRNQSIGVKMSSMSKILK) mediate DNA binding. Lys164 participates in a covalent cross-link: Glycyl lysine isopeptide (Lys-Gly) (interchain with G-Cter in ubiquitin).

The protein belongs to the PCNA family. In terms of assembly, homotrimer. Forms a complex with activator 1 heteropentamer in the presence of ATP. Component of the replisome complex. Interacts with apex2.L (via PIP box and GRF-type Zinc finger domain); the interaction is required for 3'-5' single-strand break (SSB) end resection, assembly of a checkpoint protein complex to SSB sites, and SSB signaling. Monoubiquitinated by the ube2b-rad18 complex on Lys-164. Monoubiquitination at Lys-164 also takes place in undamaged proliferating cells, and is mediated by the dcx(dtl) complex, leading to enhance PCNA-dependent translesion DNA synthesis.

It is found in the nucleus. Its function is as follows. This protein is an auxiliary protein of DNA polymerase delta and is involved in the control of eukaryotic DNA replication by increasing the polymerase's processibility during elongation of the leading strand. Promotes 3'-5' nuclease activity of the DNA-endonuclease apex2.L in response to DNA damage. This chain is Proliferating cell nuclear antigen (pcna), found in Xenopus laevis (African clawed frog).